The chain runs to 309 residues: Homoserine O-succinyltransferase (309 aa).

Cys142 serves as the catalytic Acyl-thioester intermediate. The substrate site is built by Lys163 and Ser192. Catalysis depends on His235, which acts as the Proton acceptor. Glu237 is an active-site residue. A substrate-binding site is contributed by Arg249.

Belongs to the MetA family.

It is found in the cytoplasm. The enzyme catalyses L-homoserine + succinyl-CoA = O-succinyl-L-homoserine + CoA. It participates in amino-acid biosynthesis; L-methionine biosynthesis via de novo pathway; O-succinyl-L-homoserine from L-homoserine: step 1/1. In terms of biological role, transfers a succinyl group from succinyl-CoA to L-homoserine, forming succinyl-L-homoserine. The sequence is that of Homoserine O-succinyltransferase from Pectobacterium carotovorum subsp. carotovorum (strain PC1).